The primary structure comprises 173 residues: Bifunctional protein PyrR (173 aa).

The PRPP-binding motif lies at 93–105 (VILIDDVLYTGRT).

The protein belongs to the purine/pyrimidine phosphoribosyltransferase family. PyrR subfamily. In terms of assembly, homodimer and homohexamer; in equilibrium.

It catalyses the reaction UMP + diphosphate = 5-phospho-alpha-D-ribose 1-diphosphate + uracil. Functionally, regulates transcriptional attenuation of the pyrimidine nucleotide (pyr) operon by binding in a uridine-dependent manner to specific sites on pyr mRNA. This disrupts an antiterminator hairpin in the RNA and favors formation of a downstream transcription terminator, leading to a reduced expression of downstream genes. In terms of biological role, also displays a weak uracil phosphoribosyltransferase activity which is not physiologically significant. The chain is Bifunctional protein PyrR from Streptococcus pyogenes serotype M12 (strain MGAS2096).